Reading from the N-terminus, the 497-residue chain is Glutamate--tRNA ligase (497 aa).

Positions 13 to 23 (PSPTGTPHVGM) match the 'HIGH' region motif. Positions 257 to 261 (KLSKR) match the 'KMSKS' region motif. Lysine 260 is a binding site for ATP.

It belongs to the class-I aminoacyl-tRNA synthetase family. Glutamate--tRNA ligase type 1 subfamily. As to quaternary structure, monomer.

It is found in the cytoplasm. The enzyme catalyses tRNA(Glu) + L-glutamate + ATP = L-glutamyl-tRNA(Glu) + AMP + diphosphate. Its function is as follows. Catalyzes the attachment of glutamate to tRNA(Glu) in a two-step reaction: glutamate is first activated by ATP to form Glu-AMP and then transferred to the acceptor end of tRNA(Glu). The sequence is that of Glutamate--tRNA ligase from Corynebacterium diphtheriae (strain ATCC 700971 / NCTC 13129 / Biotype gravis).